Consider the following 482-residue polypeptide: MERQPKSLCDATQLLETANIISDTVQTIIAEWSAEAKAPQGSGKQNAPMLPSRELFDAQRTILAAVGKLTELVSDPSARILEVATQFQESRSLYIAAERRIPDLLAAGDEGGVHIDQISQKAKIEPRKLARILRYLCSIGIFKQTGPDTFANNRISAALVSNEPLRAYVQLVNSEGFTASDRLPHTLLHPDTGPSYDVAKTAWQNAVCTKKTRWEWLEERVAPEQLLESGGHYPGIPSLVMGLPPREDDGLVARPELEIMGLSMVGGGRVFGTAHVYDFPWASLGDALVVDVGGGVGGFPLQLSKVYPQLRFIVQDRGPVVKQGLEKVWPRENPEALHQGRVQFVEHSFFDTNPTEGADIYFLRYVLHDWSDDYCVRILAAIRSSMAAHSRLLICDQVMNTTIGDPDLDSAPSPLPANYGYHTRFSHSRDITMMSCINGIERTPAEFKGLLQAAGLKLKKIWDCRSQVSLIEAVLPEMNGFR.

Residues 293 to 294, D316, 348 to 349, and R364 contribute to the S-adenosyl-L-methionine site; these read GG and SF. H368 functions as the Proton acceptor in the catalytic mechanism.

The protein belongs to the class I-like SAM-binding methyltransferase superfamily. Cation-independent O-methyltransferase family. As to expression, specifically expressed in conidia.

It participates in secondary metabolite biosynthesis. Its function is as follows. O-methyltransferase; part of the gene cluster that mediates the biosynthesis of trypacidin, a mycotoxin with antiprotozoal activity and that plays a role in the infection process. The pathway begins with the synthesis of atrochrysone thioester by the polyketide synthase (PKS) tpcC. The atrochrysone carboxyl ACP thioesterase tpcB then breaks the thioester bond and releases the atrochrysone carboxylic acid from tpcC. The decarboxylase tpcK converts atrochrysone carboxylic acid to atrochrysone which is further reduced into emodin anthrone. The next step is performed by the emodin anthrone oxygenase tpcL that catalyzes the oxidation of emodinanthrone to emodin. Emodin O-methyltransferase encoded by tpcA catalyzes methylation of the 8-hydroxy group of emodin to form questin. Ring cleavage of questin by questin oxidase tpcI leads to desmethylsulochrin via several intermediates including questin epoxide. Another methylation step catalyzed by tpcM leads to the formation of sulochrin which is further converted to monomethylsulfochrin by tpcH. Finally, the tpcJ catalyzes the conversion of monomethylsulfochrin to trypacidin. Trypacidin is toxic for human pulmonary and bronchial epithelial cells by initiating the intracellular formation of nitric oxide (NO) and hydrogen peroxide (H(2)O(2)), thus triggering host necrotic cell death. The trypacidin pathway is also able to produce endocrocin via a distinct route from the endocrocin Enc pathway. The polypeptide is O-methyltransferase tpcA (Aspergillus fumigatus (strain ATCC MYA-4609 / CBS 101355 / FGSC A1100 / Af293) (Neosartorya fumigata)).